A 379-amino-acid polypeptide reads, in one-letter code: Anhydro-N-acetylmuramic acid kinase (379 aa).

9–16 (GTSADGVD) contributes to the ATP binding site.

It belongs to the anhydro-N-acetylmuramic acid kinase family.

The catalysed reaction is 1,6-anhydro-N-acetyl-beta-muramate + ATP + H2O = N-acetyl-D-muramate 6-phosphate + ADP + H(+). The protein operates within amino-sugar metabolism; 1,6-anhydro-N-acetylmuramate degradation. It participates in cell wall biogenesis; peptidoglycan recycling. Its function is as follows. Catalyzes the specific phosphorylation of 1,6-anhydro-N-acetylmuramic acid (anhMurNAc) with the simultaneous cleavage of the 1,6-anhydro ring, generating MurNAc-6-P. Is required for the utilization of anhMurNAc either imported from the medium or derived from its own cell wall murein, and thus plays a role in cell wall recycling. The chain is Anhydro-N-acetylmuramic acid kinase from Prochlorococcus marinus (strain MIT 9211).